Here is a 396-residue protein sequence, read N- to C-terminus: Ribosomal RNA large subunit methyltransferase I (396 aa).

The PUA domain occupies 2–79 (AVRIKLKPGR…REEEIDREFF (78 aa)).

The protein belongs to the methyltransferase superfamily. RlmI family.

It localises to the cytoplasm. It carries out the reaction cytidine(1962) in 23S rRNA + S-adenosyl-L-methionine = 5-methylcytidine(1962) in 23S rRNA + S-adenosyl-L-homocysteine + H(+). Its function is as follows. Specifically methylates the cytosine at position 1962 (m5C1962) of 23S rRNA. This chain is Ribosomal RNA large subunit methyltransferase I, found in Shewanella sp. (strain MR-4).